An 867-amino-acid polypeptide reads, in one-letter code: Rifampicin phosphotransferase (867 aa).

An ATP-binding region spans residues 1 to 314 (MKPYVLKFQE…FYIVQSRPIT (314 aa)). ATP is bound by residues lysine 22, arginine 117, glycine 132, threonine 136, glutamine 183, glutamate 297, glutamine 309, and arginine 311. Positions 327–754 (NRVYISVAHQ…TSDGEMINGE (428 aa)) are rifampicin-binding. Glutamine 336 and tyrosine 351 together coordinate rifampicin. Positions 767-865 (GLPVSSGTVE…INGTEGYIEI (99 aa)) are swivel phosphohistidine. Histidine 825 acts as the Tele-phosphohistidine intermediate in catalysis.

It belongs to the rifampicin phosphotransferase family.

The catalysed reaction is rifampicin + ATP + H2O = 21-phosphorifampicin + AMP + phosphate + 2 H(+). Catalyzes the phosphorylation of rifampicin, also known as rifampin (RIF), leading to its inactivation. Confers high level resistance to a variety of clinically used rifamycin antibiotics. Does not show phosphoenolpyruvate (PEP) synthase activity. This is Rifampicin phosphotransferase from Listeria monocytogenes serotype 4b (strain F2365).